The sequence spans 283 residues: Non-selective voltage-gated ion channel VDAC1 (283 aa).

A2 is modified (N-acetylalanine). Position 12 (K12) interacts with ATP. A Glycyl lysine isopeptide (Lys-Gly) (interchain with G-Cter in ubiquitin) cross-link involves residue K12. S13 bears the Phosphoserine mark. T19 carries the post-translational modification Phosphothreonine. K20 contacts ATP. The residue at position 20 (K20) is an N6-acetyllysine; alternate. N6-succinyllysine; alternate is present on K20. K20 is covalently cross-linked (Glycyl lysine isopeptide (Lys-Gly) (interchain with G-Cter in ubiquitin); alternate). The next 2 beta stranded transmembrane spans lie at 26–35 (LIKLDLKTKS) and 39–47 (LEFTSSGSA). Residues K53 and K61 each participate in a glycyl lysine isopeptide (Lys-Gly) (interchain with G-Cter in ubiquitin) cross-link. Residues 54–64 (VNGSLETKYRW) form a beta stranded membrane-spanning segment. Y67 carries the post-translational modification Phosphotyrosine. A run of 3 beta stranded transmembrane segments spans residues 69-76 (LTFTEKWN), 80-89 (TLGTEITVED), and 95-104 (LKLTFDSSFS). A Phosphothreonine modification is found at T107. N6-acetyllysine; alternate is present on K109. K109 participates in a covalent cross-link: Glycyl lysine isopeptide (Lys-Gly) (interchain with G-Cter in ubiquitin); alternate. Residue K110 forms a Glycyl lysine isopeptide (Lys-Gly) (interchain with G-Cter in ubiquitin) linkage. 4 beta stranded membrane-spanning segments follow: residues 111-120 (NAKIKTGYKR), 123-130 (INLGCDVD), 137-145 (SIRGALVLG), and 150-158 (LAGYQMNFE). Position 137 is a phosphoserine (S137). K161 participates in a covalent cross-link: Glycyl lysine isopeptide (Lys-Gly) (interchain with G-Cter in ubiquitin). 6 beta stranded membrane passes run 163–175 (RVTQ…GYKT), 178–185 (FQLHTNVN), 189–198 (EFGGSIYQKV), 202–211 (LETAVNLAWT), 218–227 (RFGIAAKYQV), and 231–238 (ACFSAKVN). The residue at position 193 (S193) is a Phosphoserine; by NEK1. S240 is modified (phosphoserine). 242-244 (LIG) contacts NAD(+). A beta stranded membrane pass occupies residues 242 to 251 (LIGLGYTQTL). An N6-acetyllysine modification is found at K252. Residues 254 to 263 (GIKLTLSALL) traverse the membrane as a beta stranded segment. 260-264 (SALLD) serves as a coordination point for NAD(+). N6-acetyllysine; alternate is present on K266. K266 is covalently cross-linked (Glycyl lysine isopeptide (Lys-Gly) (interchain with G-Cter in ubiquitin); alternate). A beta stranded transmembrane segment spans residues 273–282 (HKLGLGLEFQ). A Glycyl lysine isopeptide (Lys-Gly) (interchain with G-Cter in ubiquitin) cross-link involves residue K274.

It belongs to the eukaryotic mitochondrial porin family. Homodimer and homotrimer; in response to cyclic AMP or calcium; oligomerization is required for scramblase activity. Component of the mitochondrial permeability transition pore complex (mPTPC), at least composed of SPG7, VDAC1 and PPIF. Interacts with SPG7, NIPSNAP2 and SLC25A30. Interacts with hexokinases including HK1. The HK1-VDAC1 complex interacts with ATF2. Interacts with BCL2L1. Interacts with BAK1. Interacts with RTL10/BOP (via BH3 domain). Interacts with amyloid-beta and APP; induces VDAC1 dephosphorylation. Interacts with TMEM41B. Interacts with BCAP31. Interacts with HSPA9; this interaction couples ITPR1 to VDAC1. In terms of processing, phosphorylation at Ser-193 by NEK1 promotes the closed conformational state preventing excessive mitochondrial membrane permeability and subsequent apoptotic cell death after injury. Phosphorylation by the AKT-GSK3B axis stabilizes the protein probably by preventing ubiquitin-mediated proteasomal degradation. Post-translationally, ubiquitinated. Undergoes monoubiquitination and polyubiquitination by PRKN; monoubiquitination at Lys-274 inhibits apoptosis, whereas polyubiquitination leads to its degradation and promotes mitophagy. Deubiquitinated by USP30. As to expression, widely expressed. High levels in heart and kidney with lower levels in brain and ascitic tumor. Very low levels in liver.

Its subcellular location is the mitochondrion outer membrane. The protein localises to the cell membrane. It localises to the membrane raft. It catalyses the reaction Ca(2+)(in) = Ca(2+)(out). The enzyme catalyses Na(+)(in) = Na(+)(out). The catalysed reaction is chloride(in) = chloride(out). It carries out the reaction Mg(2+)(in) = Mg(2+)(out). It catalyses the reaction K(+)(in) = K(+)(out). The enzyme catalyses ATP(in) = ATP(out). The catalysed reaction is L-glutamate(out) = L-glutamate(in). It carries out the reaction dopamine(out) = dopamine(in). It catalyses the reaction acetylcholine(in) = acetylcholine(out). The enzyme catalyses Fe(III)-[cytochrome c](out) = Fe(III)-[cytochrome c](in). The catalysed reaction is a 1,2-diacyl-sn-glycero-3-phosphocholine(in) = a 1,2-diacyl-sn-glycero-3-phosphocholine(out). It carries out the reaction a 1,2-diacyl-sn-glycero-3-phospho-L-serine(in) = a 1,2-diacyl-sn-glycero-3-phospho-L-serine(out). With respect to regulation, inhibited by nitric oxide. Voltage-gated ion channel activity is inhibited by lanthanum(3+) and ruthenium red. Mitochondrial calcium transport is inhibited by lanthanum(3+), ruthenium red and Ru360. Functionally, non-selective voltage-gated ion channel that mediates the transport of anions and cations through the mitochondrion outer membrane and plasma membrane. The channel at the outer mitochondrial membrane allows diffusion of small hydrophilic molecules; in the plasma membrane it is involved in cell volume regulation and apoptosis. It adopts an open conformation at low or zero membrane potential and a closed conformation at potentials above 30-40 mV. The open state has a weak anion selectivity whereas the closed state is cation-selective. Binds various signaling molecules, including the sphingolipid ceramide, the phospholipid phosphatidylcholine, and the sterols cholesterol and oxysterol. In depolarized mitochondria, acts downstream of PRKN and PINK1 to promote mitophagy or prevent apoptosis; polyubiquitination by PRKN promotes mitophagy, while monoubiquitination by PRKN decreases mitochondrial calcium influx which ultimately inhibits apoptosis. May participate in the formation of the permeability transition pore complex (PTPC) responsible for the release of mitochondrial products that triggers apoptosis. May mediate ATP export from cells. Part of a complex composed of HSPA9, ITPR1 and VDAC1 that regulates mitochondrial calcium-dependent apoptosis by facilitating calcium transport from the ER lumen to the mitochondria intermembrane space thus providing calcium for the downstream calcium channel MCU that directly releases it into mitochondria matrix. In terms of biological role, catalyzes the scrambling of phospholipids across the outer mitochondrial membrane; the mechanism is unrelated to channel activity and is capable of translocating both anionic and zwitterionic phospholipids. The protein is Non-selective voltage-gated ion channel VDAC1 of Rattus norvegicus (Rat).